We begin with the raw amino-acid sequence, 290 residues long: Short-chain dehydrogenase srdE (290 aa).

NADP(+)-binding residues include Ile-11, Thr-37, Asp-58, and Asn-86. The helical transmembrane segment at 125-145 (LIASSGIIVNIGSIGGVVPFV) threads the bilayer. An NADP(+)-binding site is contributed by Tyr-150. Tyr-150 serves as the catalytic Proton donor. Residue Asn-151 is glycosylated (N-linked (GlcNAc...) asparagine). Residues Lys-154, Val-183, and Thr-185 each coordinate NADP(+). The active-site Lowers pKa of active site Tyr is the Lys-154.

The protein belongs to the short-chain dehydrogenases/reductases (SDR) family.

It localises to the membrane. Functionally, short-chain dehydrogenase; part of the gene cluster that mediates the biosynthesis of sordarial, a salicylic aldehyde structurally related to the phytotoxin pyriculol. The most interesting aspect of this pathway is formation of an aromatic product from the highly reducing polyketide synthase srdA. SrdA synthesizes a reduced polyketide chain from one molecule of acetyl-CoA and five molecules of malonyl-CoA. The polyketide chain is then reductively released as an aldehyde. The oxidoreductases srdC, srdD and srdE then oxidize one of the hydroxy groups to facilitate the intramolecular aldol condensation, followed by dehydration to yield a salicylic aldehyde. This aldehyde can undergo facile reduction by endogenous reductases to yield the alcohol 1-hydroxy-2-hydroxymethyl-3-pent-1,3-dienylbenzene. The flavin-dependent srdI counteract against the propensity of the aldehydes to be reduced under physiological conditions and is responsible for reoxidizing 1-hydroxy-2-hydroxymethyl-3-pent-1,3-dienylbenzene back to the salicylic aldehyde. This salicylic aldehyde is then selectively epoxidized by the cupin-domain-containing oxidoreductase srdB to yield the epoxide, which can be hydrolyzed stereoselectively by the hydrolase srdG to give the final product sordarial. The polypeptide is Short-chain dehydrogenase srdE (Neurospora crassa (strain ATCC 24698 / 74-OR23-1A / CBS 708.71 / DSM 1257 / FGSC 987)).